The chain runs to 109 residues: Ig kappa chain V region K16-167 (109 aa).

The framework-1 stretch occupies residues 1–23 (ALVMTQTPSPVSAAVGGTVTISC). The segment at 24–35 (QASQSVYSNNLS) is complementarity-determining-1. Residues 36–50 (WFQQKPGQPPKLLIY) form a framework-2 region. The interval 51 to 57 (KASTLAS) is complementarity-determining-2. The tract at residues 58–89 (GVPSRFKGSGSGTQFTLPISGVECDDAATYYC) is framework-3. Residues 90-99 (QGTNTGNNIV) are complementarity-determining-3. The tract at residues 100-109 (FGTGTEVVVK) is framework-4.

This chain is Ig kappa chain V region K16-167, found in Oryctolagus cuniculus (Rabbit).